A 402-amino-acid chain; its full sequence is Putative F-box protein At3g23960 (402 aa).

The disordered stretch occupies residues 1–23; the sequence is MRSRQLHNVSEDRETLSRRNKRS. Residues 26–73 form the F-box domain; sequence SLNGHIPIDLLIEIFLKLPVKSIATCRSVSKFWTYVLGRQDFTELFLT.

In Arabidopsis thaliana (Mouse-ear cress), this protein is Putative F-box protein At3g23960.